The primary structure comprises 2699 residues: UPF0648 protein C3H5.09c (2699 aa).

N21 carries N-linked (GlcNAc...) asparagine glycosylation. A helical transmembrane segment spans residues 24–44 (FVWVVIATGFLFHLVLFVLSY). Residues N288, N293, N334, N345, N433, N507, N551, N655, N760, N993, N1000, N1003, N1006, and N1009 are each glycosylated (N-linked (GlcNAc...) asparagine). The segment at 975 to 1021 (KAKDPSPKSASESSSFYQNGSDIDDNDSNSSNTSNHTTENANAQQRK) is disordered. Positions 981 to 995 (PKSASESSSFYQNGS) are enriched in low complexity. Positions 1006–1033 (NTSNHTTENANAQQRKLEDLNRSFEDFL) form a coiled coil. The segment covering 1010–1019 (HTTENANAQQ) has biased composition (polar residues). N-linked (GlcNAc...) asparagine glycosylation is found at N1026, N1039, N1046, N1236, N1255, N1344, N1527, N1595, N1791, N1916, N2032, N2048, N2256, N2285, N2388, N2407, N2417, N2508, and N2622. Residues 1758-1818 (QYELLQKRRK…TLSDHYRLLE (61 aa)) are a coiled coil. Residues 2393 to 2447 (FPHIYSRNHDKRKENGSQGEADNSNYSGSLMRRRTNDQEEDALATPSSSRRDSRS) are disordered. Positions 2408–2420 (GSQGEADNSNYSG) are enriched in polar residues. Disordered stretches follow at residues 2606–2632 (AEEN…LNSP) and 2647–2676 (ADIV…ARVD). Positions 2617 to 2632 (SAISRNHSTRSSLNSP) are enriched in polar residues.

Belongs to the UPF0648 family.

The protein resides in the membrane. The polypeptide is UPF0648 protein C3H5.09c (Schizosaccharomyces pombe (strain 972 / ATCC 24843) (Fission yeast)).